The primary structure comprises 343 residues: F17c-G fimbrial adhesin (343 aa).

An N-terminal signal peptide occupies residues 1 to 22 (MTNFYKVFLAVFILVCCNISHA). Residues 23–199 (AVSFIGSTEN…LNPFTLNDTV (177 aa)) form a receptor-binding lectin domain region. A carbohydrate-binding positions include 65 to 66 (AN), 110 to 111 (DT), and 138 to 141 (STQG). Cysteines 75 and 132 form a disulfide. A fimbrillin-binding domain region spans residues 200 to 343 (TSCRLLTPSA…GISTFTFSYQ (144 aa)). Residues 287–307 (LKFGPDSPVKGNENQWQLSTG) are disordered. The segment covering 298-307 (NENQWQLSTG) has biased composition (polar residues).

This sequence belongs to the fimbrial protein family.

It localises to the fimbrium. In terms of biological role, essential fimbrial adhesion factor that mediates binding to N-acetylglucosamine-containing receptors in the host intestinal microvilli, leading to colonization of the intestinal tissue, and diarrhea or septicemia. Also confers adhesiveness to laminin and basement membranes. The protein is F17c-G fimbrial adhesin (f17cG) of Escherichia coli.